Reading from the N-terminus, the 132-residue chain is Secreted RxLR effector protein BLR08 (132 aa).

The N-terminal stretch at 1-22 (MRHKCLLAMAVVASMAFYSVIS) is a signal peptide. Asn-25 is a glycosylation site (N-linked (GlcNAc...) asparagine). Positions 36–57 (NRRLRPRVEPTANELDKQSDVD) are disordered. The RxLR-dEER signature appears at 37-83 (RRLRPRVEPTANELDKQSDVDTKLEADRRLGYPGESGFMLEGELEER). The helical transmembrane segment at 111–131 (FFLGLFASVIGVSIISACYGI) threads the bilayer.

Belongs to the RxLR effector family. In terms of assembly, interacts with host transcription factor NAC069.

The protein resides in the secreted. It is found in the host endoplasmic reticulum membrane. Secreted effector that inhibits stress-induced relocalization of the transcription factor NAC069 to the nucleus, thus affecting its broad role in abiotic and biotic stress responses. The polypeptide is Secreted RxLR effector protein BLR08 (Bremia lactucae (Lettuce downy mildew)).